Here is a 480-residue protein sequence, read N- to C-terminus: Glutamate--tRNA ligase (480 aa).

A 'HIGH' region motif is present at residues 21–31 (PSPTGYLHVGG). Zn(2+) is bound by residues C110, C112, C137, and H139. Residues 248-252 (KLSKR) carry the 'KMSKS' region motif. Position 251 (K251) interacts with ATP.

The protein belongs to the class-I aminoacyl-tRNA synthetase family. Glutamate--tRNA ligase type 1 subfamily. As to quaternary structure, monomer. Zn(2+) is required as a cofactor.

The protein localises to the cytoplasm. The catalysed reaction is tRNA(Glu) + L-glutamate + ATP = L-glutamyl-tRNA(Glu) + AMP + diphosphate. Functionally, catalyzes the attachment of glutamate to tRNA(Glu) in a two-step reaction: glutamate is first activated by ATP to form Glu-AMP and then transferred to the acceptor end of tRNA(Glu). This chain is Glutamate--tRNA ligase, found in Histophilus somni (strain 2336) (Haemophilus somnus).